Here is a 205-residue protein sequence, read N- to C-terminus: Cytochrome c biogenesis ATP-binding export protein CcmA (205 aa).

An ABC transporter domain is found at 2–204; the sequence is LEVSNLTAIR…SPKLRKIKLG (203 aa). Position 34–41 (34–41) interacts with ATP; that stretch reads GRNGTGKT.

The protein belongs to the ABC transporter superfamily. CcmA exporter (TC 3.A.1.107) family. The complex is composed of two ATP-binding proteins (CcmA) and two transmembrane proteins (CcmB).

The protein resides in the cell inner membrane. It catalyses the reaction heme b(in) + ATP + H2O = heme b(out) + ADP + phosphate + H(+). Its function is as follows. Part of the ABC transporter complex CcmAB involved in the biogenesis of c-type cytochromes; once thought to export heme, this seems not to be the case, but its exact role is uncertain. Responsible for energy coupling to the transport system. The protein is Cytochrome c biogenesis ATP-binding export protein CcmA of Vibrio vulnificus (strain CMCP6).